The sequence spans 222 residues: Flagellar L-ring protein (222 aa).

Positions 1–21 are cleaved as a signal peptide; sequence MQTFLYPRTWLILGLLLLGSG. Cysteine 22 carries N-palmitoyl cysteine lipidation. Cysteine 22 carries S-diacylglycerol cysteine lipidation.

This sequence belongs to the FlgH family. The basal body constitutes a major portion of the flagellar organelle and consists of four rings (L,P,S, and M) mounted on a central rod.

It is found in the cell outer membrane. The protein resides in the bacterial flagellum basal body. Assembles around the rod to form the L-ring and probably protects the motor/basal body from shearing forces during rotation. The chain is Flagellar L-ring protein from Methylobacillus flagellatus (strain ATCC 51484 / DSM 6875 / VKM B-1610 / KT).